The chain runs to 102 residues: Small ribosomal subunit protein uS10 (102 aa).

This sequence belongs to the universal ribosomal protein uS10 family. Part of the 30S ribosomal subunit.

In terms of biological role, involved in the binding of tRNA to the ribosomes. This is Small ribosomal subunit protein uS10 from Methylobacterium nodulans (strain LMG 21967 / CNCM I-2342 / ORS 2060).